A 257-amino-acid polypeptide reads, in one-letter code: G2/mitotic-specific cyclin S13-7 (257 aa).

It belongs to the cyclin family. Cyclin AB subfamily. Interacts with the CDC2 protein kinase to form a serine/threonine kinase holoenzyme complex also known as maturation promoting factor (MPF). The cyclin subunit imparts substrate specificity to the complex.

Its function is as follows. Essential for the control of the cell cycle at the G2/M (mitosis) transition. The polypeptide is G2/mitotic-specific cyclin S13-7 (Glycine max (Soybean)).